We begin with the raw amino-acid sequence, 266 residues long: Protein crossbronx-like (266 aa).

The region spanning 15–178 (KQGYHILAEY…VQEQAIASRN (164 aa)) is the UBC core domain.

The protein belongs to the ubiquitin-conjugating enzyme family. FTS subfamily.

This chain is Protein crossbronx-like, found in Drosophila yakuba (Fruit fly).